We begin with the raw amino-acid sequence, 596 residues long: Uptake hydrogenase large subunit (596 aa).

Positions 75, 78, 575, and 578 each coordinate Ni(2+).

It belongs to the [NiFe]/[NiFeSe] hydrogenase large subunit family. As to quaternary structure, heterodimer of a large and a small subunit. Requires Ni(2+) as cofactor.

Its subcellular location is the cell membrane. The catalysed reaction is H2 + A = AH2. Its function is as follows. This enzyme recycles the H(2) produced by nitrogenase to increase the production of ATP and to protect nitrogenase against inhibition or damage by O(2) under carbon- or phosphate-limited conditions. The polypeptide is Uptake hydrogenase large subunit (hupB) (Bradyrhizobium diazoefficiens (strain JCM 10833 / BCRC 13528 / IAM 13628 / NBRC 14792 / USDA 110)).